A 568-amino-acid polypeptide reads, in one-letter code: MSATNPTRDDFAALLEESFAKTDLAEGYVAKGIVTAIEKDVAIVDVGLKVEGRVPLKEFGAKAKDGTLKVGDEVEVYVERIENALGEAVLSREKARREESWQRLEVKFEAGERVEGIIFNQVKGGFTVDLDGAVAFLPRSQVDIRPIRDVTPLMHNPQPFEILKMDKRRGNIVVSRRTVLEESRAEQRSEIVQNLEEGQVVEGVVKNITDYGAFVDLGGIDGLLHVTDMAWRRVNHPSEILNIGQQVKVQIIRINQETHRISLGMKQLESDPWDGIGAKYPVGKKISGTVTNITDYGAFVELEPGIEGLIHISEMSWTKKNVHPGKILSTSQEVDVVVLEVDPTKRRISLGLKQTLENPWQAFAHSHPAGTEVEGEVKNKTEFGLFIGLDGDVDGMVHLSDLDWNRPGEQVIEEFNKGDVVRAVVLDVDVDKERISLGIKQLGRDAVGEAAASGELRKNAVVSAEVIGVNDGGIEVRLVNHEDVTAFIRRADLSRDRDEQRPERFSVGQTVDARVTNFSKKDRKIQLSIKALEIAEEKEAVAQFGSSDSGASLGDILGAALKNRQNNE.

6 consecutive S1 motif domains span residues 27-93, 111-177, 198-266, 283-353, 370-440, and 459-530; these read GYVA…LSRE, GERV…VSRR, GQVV…LGMK, GKKI…LGLK, GTEV…LGIK, and NAVV…LSIK.

The protein belongs to the bacterial ribosomal protein bS1 family.

Its function is as follows. Binds mRNA; thus facilitating recognition of the initiation point. It is needed to translate mRNA with a short Shine-Dalgarno (SD) purine-rich sequence. This Rhizobium meliloti (strain 1021) (Ensifer meliloti) protein is Small ribosomal subunit protein bS1 (rpsA).